Reading from the N-terminus, the 294-residue chain is Fructose-bisphosphate aldolase class 1 (294 aa).

Catalysis depends on Glu176, which acts as the Proton acceptor. Residue Lys213 is the Schiff-base intermediate with dihydroxyacetone-P of the active site.

The protein belongs to the class I fructose-bisphosphate aldolase family.

The catalysed reaction is beta-D-fructose 1,6-bisphosphate = D-glyceraldehyde 3-phosphate + dihydroxyacetone phosphate. Its pathway is carbohydrate degradation; glycolysis; D-glyceraldehyde 3-phosphate and glycerone phosphate from D-glucose: step 4/4. This is Fructose-bisphosphate aldolase class 1 from Oceanobacillus iheyensis (strain DSM 14371 / CIP 107618 / JCM 11309 / KCTC 3954 / HTE831).